The chain runs to 164 residues: Peptide deformylase (164 aa).

Fe cation-binding residues include C87 and H129. Residue E130 is part of the active site. H133 is a binding site for Fe cation.

Belongs to the polypeptide deformylase family. Fe(2+) serves as cofactor.

The enzyme catalyses N-terminal N-formyl-L-methionyl-[peptide] + H2O = N-terminal L-methionyl-[peptide] + formate. Functionally, removes the formyl group from the N-terminal Met of newly synthesized proteins. Requires at least a dipeptide for an efficient rate of reaction. N-terminal L-methionine is a prerequisite for activity but the enzyme has broad specificity at other positions. In Thermotoga sp. (strain RQ2), this protein is Peptide deformylase.